Here is a 206-residue protein sequence, read N- to C-terminus: Octanoyltransferase (206 aa).

The 177-residue stretch at 30 to 206 folds into the BPL/LPL catalytic domain; the sequence is PETNDEIWLV…EFVTLLNNSI (177 aa). Substrate contacts are provided by residues 69-76, 137-139, and 150-152; these read RGGQVTYH, SLG, and GIA. Catalysis depends on cysteine 168, which acts as the Acyl-thioester intermediate.

It belongs to the LipB family.

The protein localises to the cytoplasm. The enzyme catalyses octanoyl-[ACP] + L-lysyl-[protein] = N(6)-octanoyl-L-lysyl-[protein] + holo-[ACP] + H(+). The protein operates within protein modification; protein lipoylation via endogenous pathway; protein N(6)-(lipoyl)lysine from octanoyl-[acyl-carrier-protein]: step 1/2. In terms of biological role, catalyzes the transfer of endogenously produced octanoic acid from octanoyl-acyl-carrier-protein onto the lipoyl domains of lipoate-dependent enzymes. Lipoyl-ACP can also act as a substrate although octanoyl-ACP is likely to be the physiological substrate. This is Octanoyltransferase from Francisella tularensis subsp. novicida (strain U112).